The following is a 503-amino-acid chain: Podocalyxin (503 aa).

A signal peptide spans 1–21 (MPPTTALSALLLLLLSPASHS). The tract at residues 19-236 (SHSHNGNETS…PLTSQTPGIT (218 aa)) is disordered. Residues 20-50 (HSHNGNETSTSAIKSSTVQSHQSATTSTEVT) are compositionally biased toward polar residues. Topologically, residues 22–404 (HNGNETSTSA…PPEVNEDRFS (383 aa)) are extracellular. N-linked (GlcNAc...) asparagine glycans are attached at residues asparagine 25, asparagine 89, and asparagine 94. Residues 61–91 (STQPSNPTPFTTSTQSPSMPTSTPNPTSNQS) show a composition bias toward low complexity. The span at 107-126 (TSSPSSTAFTSSSGQTASSG) shows a compositional bias: low complexity. Over residues 131–183 (DSFTTAPTTTLGLINVSSQPTDLNTTSKLLSTPTTDNTTSPQQPVDSSPSTAS) the composition is skewed to polar residues. 4 N-linked (GlcNAc...) asparagine glycosylation sites follow: asparagine 145, asparagine 154, asparagine 167, and asparagine 206. A compositionally biased stretch (low complexity) spans 196–208 (SSSGSTPSTDNST). A compositionally biased stretch (polar residues) spans 222–236 (SEATQPLTSQTPGIT). An N-linked (GlcNAc...) asparagine glycan is attached at asparagine 303. The helical transmembrane segment at 405-425 (LPLIITIVCMASFLLLVAALY) threads the bilayer. Residues 426–503 (GCCHQRISQR…DLDEEEDTHL (78 aa)) lie on the Cytoplasmic side of the membrane. Residue threonine 463 is modified to Phosphothreonine. Serine 482 is subject to Phosphoserine. Threonine 501 carries the phosphothreonine modification.

The protein belongs to the podocalyxin family. Monomer; when associated with the membrane raft. Oligomer; when integrated in the apical membrane. Found in a complex with EZR, PODXL and NHERF2. Associates with the actin cytoskeleton through complex formation with EZR and NHERF2. Interacts (via the C-terminal PDZ-binding motif DTHL) with NHERF1 (via the PDZ domains); interaction is not detected in glomerular epithelium cells, take place early in the secretory pathway and is necessary for its apical membrane sorting. Interacts (via the C-terminal PDZ-binding motif DTHL) with NHERF2 (via the PDZ 1 domain); interaction is detected in glomerular epithelium cells. Interacts with EZR. N- and O-linked glycosylated. Sialoglycoprotein. As to expression, expressed in liver cells and hematopoietic cells (at protein level). Glomerular epithelium cell (podocyte).

Its subcellular location is the apical cell membrane. The protein resides in the cell projection. It is found in the microvillus. The protein localises to the membrane raft. It localises to the lamellipodium. Its subcellular location is the filopodium. The protein resides in the ruffle. It is found in the membrane. In terms of biological role, involved in the regulation of both adhesion and cell morphology and cancer progression. Functions as an anti-adhesive molecule that maintains an open filtration pathway between neighboring foot processes in the podocyte by charge repulsion. Acts as a pro-adhesive molecule, enhancing the adherence of cells to immobilized ligands, increasing the rate of migration and cell-cell contacts in an integrin-dependent manner. Induces the formation of apical actin-dependent microvilli. Involved in the formation of a preapical plasma membrane subdomain to set up initial epithelial polarization and the apical lumen formation during renal tubulogenesis. Plays a role in cancer development and aggressiveness by inducing cell migration and invasion through its interaction with the actin-binding protein EZR. Affects EZR-dependent signaling events, leading to increased activities of the MAPK and PI3K pathways in cancer cells. The chain is Podocalyxin (Podxl) from Mus musculus (Mouse).